Consider the following 650-residue polypeptide: MASGEHSPGSGAARRPLHSAQAVDVASASNFRAFELLHLHLDLRAEFGPPGPGAGSRGLSGTAVLDLRCLEPEGAAELRLDSHPCLEVTAAALRRERPGSEEPPAEPVSFYTQPFSHYGQALCVSFPQPCRAAERLQVLLTYRVGEGPGVCWLAPEQTAGKKKPFVYTQGQAVLNRAFFPCFDTPAVKYKYSALIEVPDGFTAVMSASTWEKRGPNKFFFQMCQPIPSYLIALAIGDLVSAEVGPRSRVWAEPCLIDAAKEEYNGVIEEFLATGEKLFGPYVWGRYDLLFMPPSFPFGGMENPCLTFVTPCLLAGDRSLADVIIHEISHSWFGNLVTNANWGEFWLNEGFTMYAQRRISTILFGAAYTCLEAATGRALLRQHMDITGEENPLNKLRVKIEPGVDPDDTYNETPYEKGFCFVSYLAHLVGDQDQFDSFLKAYVHEFKFRSILADDFLDFYLEYFPELKKKRVDIIPGFEFDRWLNTPGWPPYLPDLSPGDSLMKPAEELAQLWAAEELDMKAIEAVAISPWKTYQLVYFLDKILQKSPLPPGNVKKLGDTYPSISNARNAELRLRWGQIVLKNDHQEDFWKVKEFLHNQGKQKYTLPLYHAMMGGSEVAQTLAKETFASTASQLHSNVVNYVQQIVAPKGS.

Alanine 2 is modified (N-acetylalanine). Serine 7 carries the post-translational modification Phosphoserine. Position 298 to 302 (298 to 302 (GGMEN)) interacts with substrate. Zn(2+) is bound at residue histidine 325. Glutamate 326 (proton acceptor) is an active-site residue. 2 residues coordinate Zn(2+): histidine 329 and glutamate 348. Lysine 446 carries the post-translational modification N6-acetyllysine.

This sequence belongs to the peptidase M1 family. Zn(2+) is required as a cofactor.

The protein resides in the secreted. It carries out the reaction Release of N-terminal Arg and Lys from oligopeptides when P1' is not Pro. Also acts on arylamides of Arg and Lys.. Exopeptidase which selectively removes arginine and/or lysine residues from the N-terminus of several peptide substrates including Arg(0)-Leu-enkephalin, Arg(0)-Met-enkephalin and Arg(-1)-Lys(0)-somatostatin-14. Can hydrolyze leukotriene A4 (LTA-4) into leukotriene B4 (LTB-4). The polypeptide is Aminopeptidase B (RNPEP) (Homo sapiens (Human)).